Consider the following 693-residue polypeptide: MHNTLLFELGTEELPARFIPGLIKQLEENSANLLTEYRIEYENIKVMATPRRLTLLVNGLADKQQSSTTMKRGPAKEIAFDENGEPTKAAIGFARGQNIDPKDLEIREDNGKEYVYAVAEIVGENCQDVLPKLLDELITKFNLPVKMFWNNKQDKFLRPVRWLVCLFNDQVLPLNFGTVEASNISRGHRFLSQGDVIINSAENYEEVMRDSWVMVDHNVREETIKAQIEELADQMNASPEMPHDLLEEVNFLVEWPTALLGNFAEEFLEIPKEALITSMQEHQKYFALVDKEDSSKLLPYFVAVRNGDDHGIDKVKAGNERVLRARLSDARFFFEEDTKTSLESKREQLKSIIYKEQLGSVDQKVTRMEELGKTLLDILELSEPVRSLTLRAIALSKADLPTNMVSEFPHLQGIMGEKYARIHGEDEKVCLGISEHYLPRHTGDKLPQTMVGTITSIVDKVDNIASSFAIGERPSGSQDPYALRRQALGIVHIILETELAFSLEQLFHRALSLIPESALVAPISNILDDILDFVKLRSRTIFNEQGLPIDIIDSTLEVDKANVYKAYLRAKVLKDYRDSQELEDVRTAYTRVKNLANKAKGEDVYTELLQDETEKMLYHKYLNTEDKLLSDLEQDEISSAISELAGFKDYIDQFFDEVMVMVDDKHLQNNRLNLIYHIKEMYRQLADFSIIQD.

This sequence belongs to the class-II aminoacyl-tRNA synthetase family. As to quaternary structure, tetramer of two alpha and two beta subunits.

The protein resides in the cytoplasm. The catalysed reaction is tRNA(Gly) + glycine + ATP = glycyl-tRNA(Gly) + AMP + diphosphate. The sequence is that of Glycine--tRNA ligase beta subunit from Natranaerobius thermophilus (strain ATCC BAA-1301 / DSM 18059 / JW/NM-WN-LF).